Here is a 1017-residue protein sequence, read N- to C-terminus: Nonsense-mediated mRNA decay factor SMG5 (1017 aa).

Ser-2 bears the N-acetylserine mark. Phosphoserine occurs at positions 2 and 423. Disordered regions lie at residues Gly-406–Ala-562 and Thr-597–Glu-640. Residues Lys-448–Pro-467 show a composition bias toward basic residues. The segment covering Asp-486–Ser-496 has biased composition (low complexity). Over residues Ala-620 to Gly-629 the composition is skewed to acidic residues. The stretch at Ala-798–Glu-842 forms a coiled coil. The 124-residue stretch at Arg-873–Ala-996 folds into the PINc domain.

As to quaternary structure, interacts with TERT, PPP2CA and SMG1. Part of a complex that contains SMG1, SMG5, SMG7, PPP2CA, a short isoform of UPF3A (isoform UPF3AS, but not isoform UPF3AL) and phosphorylated UPF1. Not detected in complexes that contain unphosphorylated UPF1.

Its subcellular location is the cytoplasm. The protein resides in the nucleus. Its function is as follows. Plays a role in nonsense-mediated mRNA decay. Does not have RNase activity by itself. Promotes dephosphorylation of UPF1. Together with SMG7 is thought to provide a link to the mRNA degradation machinery involving exonucleolytic pathways, and to serve as an adapter for UPF1 to protein phosphatase 2A (PP2A), thereby triggering UPF1 dephosphorylation. Necessary for TERT activity. The protein is Nonsense-mediated mRNA decay factor SMG5 of Mus musculus (Mouse).